The chain runs to 208 residues: Thymidylate kinase (208 aa).

Position 10-17 (10-17) interacts with ATP; it reads GPEGSGKT.

This sequence belongs to the thymidylate kinase family.

It carries out the reaction dTMP + ATP = dTDP + ADP. Its function is as follows. Phosphorylation of dTMP to form dTDP in both de novo and salvage pathways of dTTP synthesis. This is Thymidylate kinase from Bacillus cereus (strain B4264).